Reading from the N-terminus, the 376-residue chain is N-acetyldiaminopimelate deacetylase (376 aa).

Asp69 is an active-site residue. Catalysis depends on Glu128, which acts as the Proton acceptor.

It belongs to the peptidase M20A family. N-acetyldiaminopimelate deacetylase subfamily.

It catalyses the reaction N-acetyl-(2S,6S)-2,6-diaminopimelate + H2O = (2S,6S)-2,6-diaminopimelate + acetate. It participates in amino-acid biosynthesis; L-lysine biosynthesis via DAP pathway; LL-2,6-diaminopimelate from (S)-tetrahydrodipicolinate (acetylase route): step 3/3. Its function is as follows. Catalyzes the conversion of N-acetyl-diaminopimelate to diaminopimelate and acetate. This Streptococcus pneumoniae serotype 19F (strain G54) protein is N-acetyldiaminopimelate deacetylase.